A 250-amino-acid chain; its full sequence is tRNA (guanine-N(1)-)-methyltransferase (250 aa).

S-adenosyl-L-methionine contacts are provided by residues Gly113 and 134-139; that span reads IGDYVL.

The protein belongs to the RNA methyltransferase TrmD family. In terms of assembly, homodimer.

The protein localises to the cytoplasm. It catalyses the reaction guanosine(37) in tRNA + S-adenosyl-L-methionine = N(1)-methylguanosine(37) in tRNA + S-adenosyl-L-homocysteine + H(+). Specifically methylates guanosine-37 in various tRNAs. The protein is tRNA (guanine-N(1)-)-methyltransferase of Buchnera aphidicola subsp. Baizongia pistaciae (strain Bp).